Here is a 214-residue protein sequence, read N- to C-terminus: Potassium/proton antiporter CemA (214 aa).

The next 2 membrane-spanning stretches (helical) occupy residues 92-112 and 174-194; these read ILHL…SILG and IISG…KYWI.

Belongs to the CemA family.

The protein resides in the plastid. It localises to the chloroplast inner membrane. The catalysed reaction is K(+)(in) + H(+)(out) = K(+)(out) + H(+)(in). Functionally, contributes to K(+)/H(+) antiport activity by supporting proton efflux to control proton extrusion and homeostasis in chloroplasts in a light-dependent manner to modulate photosynthesis. Prevents excessive induction of non-photochemical quenching (NPQ) under continuous-light conditions. Indirectly promotes efficient inorganic carbon uptake into chloroplasts. The chain is Potassium/proton antiporter CemA from Oenothera argillicola (Appalachian evening primrose).